The primary structure comprises 334 residues: Glyoxylate reductase (334 aa).

NADP(+)-binding positions include L158–I161, S180–T182, and I239–R241. Active-site residues include R241 and E270. The active-site Proton donor is H288. Position 288 to 290 (H288 to G290) interacts with NADP(+).

Belongs to the D-isomer specific 2-hydroxyacid dehydrogenase family. GyaR subfamily. As to quaternary structure, homodimer.

The protein resides in the cytoplasm. It carries out the reaction glycolate + NAD(+) = glyoxylate + NADH + H(+). The polypeptide is Glyoxylate reductase (gyaR) (Pyrococcus horikoshii (strain ATCC 700860 / DSM 12428 / JCM 9974 / NBRC 100139 / OT-3)).